We begin with the raw amino-acid sequence, 396 residues long: S-adenosylmethionine synthase (396 aa).

ATP is bound at residue His16. Asp18 contributes to the Mg(2+) binding site. Glu44 is a binding site for K(+). 2 residues coordinate L-methionine: Glu57 and Gln100. A flexible loop region spans residues 100 to 110 (QSQDIARGVDN). Residues 162–164 (DGK), 228–229 (RF), Asp237, 243–244 (RK), Ala260, and Lys264 contribute to the ATP site. Asp237 is a binding site for L-methionine. Lys268 is an L-methionine binding site.

Belongs to the AdoMet synthase family. Homotetramer; dimer of dimers. Mg(2+) serves as cofactor. It depends on K(+) as a cofactor.

It is found in the cytoplasm. The catalysed reaction is L-methionine + ATP + H2O = S-adenosyl-L-methionine + phosphate + diphosphate. Its pathway is amino-acid biosynthesis; S-adenosyl-L-methionine biosynthesis; S-adenosyl-L-methionine from L-methionine: step 1/1. Catalyzes the formation of S-adenosylmethionine (AdoMet) from methionine and ATP. The overall synthetic reaction is composed of two sequential steps, AdoMet formation and the subsequent tripolyphosphate hydrolysis which occurs prior to release of AdoMet from the enzyme. The protein is S-adenosylmethionine synthase of Myxococcus xanthus (strain DK1622).